The following is a 91-amino-acid chain: Histone H1, sperm (91 aa).

Residues 1–25 (PGSPQKRAASPRKSPRKGSPKKSPM) form a disordered region. Residues 9 to 20 (ASPRKSPRKGSP) show a composition bias toward basic residues. The 74-residue stretch at 18–91 (GSPKKSPMIR…TGATGRFRVG (74 aa)) folds into the H15 domain.

It belongs to the histone H1/H5 family.

The protein resides in the nucleus. It is found in the chromosome. Histones H1 are necessary for the condensation of nucleosome chains into higher-order structures. This Sphaerechinus granularis (Purple sea urchin) protein is Histone H1, sperm.